Consider the following 685-residue polypeptide: Protein hook (685 aa).

The region spanning 6–122 (MEIYESLIRW…RLLQLILGCA (117 aa)) is the Calponin-homology (CH) domain. Residues 134 to 570 (QIMELEESLQ…LLAADSRYKK (437 aa)) are a coiled coil. Disordered regions lie at residues 430–449 (AAED…SSDV), 593–625 (LEKP…SGRV), and 661–685 (PGQS…FAKK). Residues 602 to 623 (ASSSSATGSGGDASTLTSTGSG) are compositionally biased toward low complexity. Residues 661–670 (PGQSFLSRQR) are compositionally biased toward polar residues.

It belongs to the hook family. In terms of assembly, homodimer. Interacts with microtubules via its N-terminus.

Its subcellular location is the cytoplasm. It is found in the cytoskeleton. It localises to the endosome. Its function is as follows. Involved in endocytic trafficking. Probably acts as a cytoskeletal linker protein that tethers endosome vesicles to the cytoskeleton. This is Protein hook from Aedes aegypti (Yellowfever mosquito).